The chain runs to 177 residues: Large ribosomal subunit protein uL16 (177 aa).

The protein belongs to the universal ribosomal protein uL16 family.

In Natronomonas pharaonis (strain ATCC 35678 / DSM 2160 / CIP 103997 / JCM 8858 / NBRC 14720 / NCIMB 2260 / Gabara) (Halobacterium pharaonis), this protein is Large ribosomal subunit protein uL16.